The primary structure comprises 400 residues: Multidrug resistance protein MdtH (400 aa).

10 helical membrane-spanning segments follow: residues 13–33 (YFLLLDNMLVVLGFFVVFPLI), 34–54 (SIRFVEQLGWAGVIVGFALGL), 99–116 (PWILWLSCILSALGGTLF), 139–159 (LLLMQDSAGAVIGALIGSWLL), 165–185 (LVCWVGAGIFVLAAIFNAWLL), 214–234 (VLTLTGYFVLSVQVMLMFPIV), 244–264 (AVKWMYAIEALLSLTLLYPIA), 289–309 (FPVGITHSLHAIFLIITLFYL), 340–360 (LGLAFGGAIGYTGGGWMYDIG), and 365–385 (LPELPWFLLGSIGFITLYALH).

It belongs to the major facilitator superfamily. DHA1 family. MdtH (TC 2.A.1.2.21) subfamily.

The protein localises to the cell inner membrane. This is Multidrug resistance protein MdtH from Proteus mirabilis (strain HI4320).